We begin with the raw amino-acid sequence, 378 residues long: Signal peptide peptidase (378 aa).

The tract at residues 1-27 (MDSAVSDPHNGSAEAGTPANGTTRPPS) is disordered. Residues 1–31 (MDSAVSDPHNGSAEAGTPANGTTRPPSTPEG) lie on the Lumenal side of the membrane. N-linked (GlcNAc...) asparagine glycosylation is found at asparagine 10 and asparagine 20. A helical transmembrane segment spans residues 32–52 (IALAYGSLLLMALLPIFFGAL). Residues 53–77 (RSVRCARGKSSSDMPETITSRDAAR) are Cytoplasmic-facing. The chain crosses the membrane as a helical span at residues 78–98 (FPIIASCTLLGLYLFFKIFSQ). Topologically, residues 99 to 100 (EY) are lumenal. A helical membrane pass occupies residues 101–121 (INLLLSMYFFVLGILALSHTI). Residues 122 to 157 (SPFMNKFFPANFPNRQYQLLFTQGSGENKEEIINYE) are Cytoplasmic-facing. Residues 158–178 (FDTKDLVCLGLSSVVGVWYLL) traverse the membrane as a helical segment. Residues 179–181 (RKH) lie on the Lumenal side of the membrane. Residues 182-202 (WIANNLFGLAFSLNGVELLHL) traverse the membrane as a helical segment. Topologically, residues 203–209 (NNVSTGC) are cytoplasmic. A helical transmembrane segment spans residues 210–230 (ILLGGLFIYDIFWVFGTNVMV). Residue aspartate 219 is part of the active site. The Lumenal segment spans residues 231–256 (TVAKSFEAPIKLVFPQDLLEKGLEAD). A helical membrane pass occupies residues 257–277 (NFAMLGLGDIVIPGIFIALLL). Residue aspartate 265 is part of the active site. Residues 278–290 (RFDISLKKNTHTY) are Cytoplasmic-facing. Residues 291 to 311 (FYTSFAAYIFGLGLTIFIMHI) form a helical membrane-spanning segment. Topologically, residues 312–314 (FKH) are lumenal. A helical transmembrane segment spans residues 315-335 (AQPALLYLVPACIGFPVLVAL). Positions 317–319 (PAL) match the PAL motif. Over 336–378 (AKGEVAEMFSYEESNPKDPAAETESKEESTEASASKRLEKKEK) the chain is Cytoplasmic. The segment at 346 to 378 (YEESNPKDPAAETESKEESTEASASKRLEKKEK) is disordered. A compositionally biased stretch (basic and acidic residues) spans 349 to 378 (SNPKDPAAETESKEESTEASASKRLEKKEK). Serine 368 bears the Phosphoserine mark.

This sequence belongs to the peptidase A22B family. As to quaternary structure, monomer. Homodimer. Interacts with RNF139. Interacts with DERL1 and XBP1 isoform 1. In terms of tissue distribution, widely expressed with highest levels in liver and kidney. In the brain, expressed predominantly in hippocampus, amygdala, piriform cortex, choroid plexus and arcuate nucleus of the hypothalamic area. Isoform 1 is more strongly expressed than isoform 4 in most tissues except brain and skeletal muscle where isoform 4 is the dominant isoform and in testis where isoform 1 and isoform 4 are expressed at similar levels. In the brain, isoform 4 is not detected in the choroid plexus.

The protein localises to the endoplasmic reticulum membrane. It localises to the membrane. It is found in the cell membrane. In terms of biological role, catalyzes intramembrane proteolysis of signal peptides that have been removed from precursors of secretory and membrane proteins, resulting in the release of the fragment from the ER membrane into the cytoplasm. Required to generate lymphocyte cell surface (HLA-E) epitopes derived from MHC class I signal peptides. Involved in the intramembrane cleavage of the integral membrane protein PSEN1. Cleaves the integral membrane protein XBP1 isoform 1 in a DERL1/RNF139-dependent manner. May play a role in graft rejection. The chain is Signal peptide peptidase from Mus musculus (Mouse).